The primary structure comprises 335 residues: MKVSEFDYELPSELIAQEPVEPRDASRLMVLHRKTQRIEHRIFREIIEYLEPGDLLVLNVSKVIPARLYARKKTGASIEILLIERLEEGIWKCLVRPGQKVKKGTELVIDEDLSAVCLGRGEDGTRILKFQPQDDRLIFEKGRTPLPPYIKNEVPLERYQTVYAKEEGSVAAPTAGLHFTPELIEKLKKKGVQFAEVVLHVGIGTFRPVKVEEVEKHKMHEEFYQVTKETIKKLRETRERGNRIVAVGTTTVRTLETIARLPEQEEYVGKTDLFIYPPFEFKLVDALITNFHLPRSTLLMLVAAFAGKDFVMEAYREAVKRRYRFFSFGDAMLIL.

Belongs to the QueA family. As to quaternary structure, monomer.

The protein localises to the cytoplasm. It catalyses the reaction 7-aminomethyl-7-carbaguanosine(34) in tRNA + S-adenosyl-L-methionine = epoxyqueuosine(34) in tRNA + adenine + L-methionine + 2 H(+). The protein operates within tRNA modification; tRNA-queuosine biosynthesis. In terms of biological role, transfers and isomerizes the ribose moiety from AdoMet to the 7-aminomethyl group of 7-deazaguanine (preQ1-tRNA) to give epoxyqueuosine (oQ-tRNA). The polypeptide is S-adenosylmethionine:tRNA ribosyltransferase-isomerase (Thermotoga petrophila (strain ATCC BAA-488 / DSM 13995 / JCM 10881 / RKU-1)).